Consider the following 173-residue polypeptide: MAKRRKSSRTKEKETNWQERVIQIRRVSKVVKGGKKLSFRAIVVVGNETGQVGVGVGKAGDVIGAVRKGVADGKKQLIEVPLTKASSIPHLTNGASGGASVIMRPAAPGTGVIAGGAVRTVLELAGVKNILAKQLGSDNPLNNARAAINALETLRTFSEVAKERDVPLEHIYS.

In terms of domain architecture, S5 DRBM spans 17–80; sequence WQERVIQIRR…ADGKKQLIEV (64 aa).

It belongs to the universal ribosomal protein uS5 family. In terms of assembly, part of the 30S ribosomal subunit. Contacts proteins S4 and S8.

Functionally, with S4 and S12 plays an important role in translational accuracy. In terms of biological role, located at the back of the 30S subunit body where it stabilizes the conformation of the head with respect to the body. This Gloeothece citriformis (strain PCC 7424) (Cyanothece sp. (strain PCC 7424)) protein is Small ribosomal subunit protein uS5.